Reading from the N-terminus, the 161-residue chain is Regulator of ribonuclease activity A (161 aa).

This sequence belongs to the RraA family. Homotrimer. Binds to both RNA-binding sites in the C-terminal region of Rne and to RhlB.

The protein resides in the cytoplasm. In terms of biological role, globally modulates RNA abundance by binding to RNase E (Rne) and regulating its endonucleolytic activity. Can modulate Rne action in a substrate-dependent manner by altering the composition of the degradosome. Modulates RNA-binding and helicase activities of the degradosome. The protein is Regulator of ribonuclease activity A of Yersinia pseudotuberculosis serotype O:1b (strain IP 31758).